The chain runs to 340 residues: 4-hydroxy-3-methylbut-2-enyl diphosphate reductase (340 aa).

[4Fe-4S] cluster is bound at residue C19. (2E)-4-hydroxy-3-methylbut-2-enyl diphosphate contacts are provided by H50 and H90. Positions 50 and 90 each coordinate dimethylallyl diphosphate. Isopentenyl diphosphate contacts are provided by H50 and H90. [4Fe-4S] cluster is bound at residue C112. H141 contacts (2E)-4-hydroxy-3-methylbut-2-enyl diphosphate. H141 is a dimethylallyl diphosphate binding site. Residue H141 coordinates isopentenyl diphosphate. The active-site Proton donor is the E143. Residue T190 participates in (2E)-4-hydroxy-3-methylbut-2-enyl diphosphate binding. [4Fe-4S] cluster is bound at residue C220. The (2E)-4-hydroxy-3-methylbut-2-enyl diphosphate site is built by S248, S249, N250, and S292. Dimethylallyl diphosphate contacts are provided by S248, S249, N250, and S292. Positions 248, 249, 250, and 292 each coordinate isopentenyl diphosphate.

Belongs to the IspH family. [4Fe-4S] cluster is required as a cofactor.

The enzyme catalyses isopentenyl diphosphate + 2 oxidized [2Fe-2S]-[ferredoxin] + H2O = (2E)-4-hydroxy-3-methylbut-2-enyl diphosphate + 2 reduced [2Fe-2S]-[ferredoxin] + 2 H(+). The catalysed reaction is dimethylallyl diphosphate + 2 oxidized [2Fe-2S]-[ferredoxin] + H2O = (2E)-4-hydroxy-3-methylbut-2-enyl diphosphate + 2 reduced [2Fe-2S]-[ferredoxin] + 2 H(+). Its pathway is isoprenoid biosynthesis; dimethylallyl diphosphate biosynthesis; dimethylallyl diphosphate from (2E)-4-hydroxy-3-methylbutenyl diphosphate: step 1/1. It participates in isoprenoid biosynthesis; isopentenyl diphosphate biosynthesis via DXP pathway; isopentenyl diphosphate from 1-deoxy-D-xylulose 5-phosphate: step 6/6. Its function is as follows. Catalyzes the conversion of 1-hydroxy-2-methyl-2-(E)-butenyl 4-diphosphate (HMBPP) into a mixture of isopentenyl diphosphate (IPP) and dimethylallyl diphosphate (DMAPP). Acts in the terminal step of the DOXP/MEP pathway for isoprenoid precursor biosynthesis. The protein is 4-hydroxy-3-methylbut-2-enyl diphosphate reductase of Thermus thermophilus (strain ATCC BAA-163 / DSM 7039 / HB27).